The following is a 298-amino-acid chain: Ethanolamine ammonia-lyase small subunit (298 aa).

Val210, Glu231, and Cys261 together coordinate adenosylcob(III)alamin.

Belongs to the EutC family. As to quaternary structure, the basic unit is a heterodimer which dimerizes to form tetramers. The heterotetramers trimerize; 6 large subunits form a core ring with 6 small subunits projecting outwards. Requires adenosylcob(III)alamin as cofactor.

Its subcellular location is the bacterial microcompartment. The catalysed reaction is ethanolamine = acetaldehyde + NH4(+). It participates in amine and polyamine degradation; ethanolamine degradation. Catalyzes the deamination of various vicinal amino-alcohols to oxo compounds. Allows this organism to utilize ethanolamine as the sole source of nitrogen and carbon in the presence of external vitamin B12. In Salmonella heidelberg (strain SL476), this protein is Ethanolamine ammonia-lyase small subunit.